The chain runs to 830 residues: GPI ethanolamine phosphate transferase 2 (830 aa).

A signal peptide spans 1–32 (MNLKQFTCLSCAQLLAILLFIFAFFPRKIVLT). The Lumenal portion of the chain corresponds to 33-321 (GISKQDPDQD…QYLETVQQID (289 aa)). Residues Asn-145, Asn-185, and Asn-298 are each glycosylated (N-linked (GlcNAc...) asparagine). Residues 322-342 (IVPTIAALFGMPIPMNSVGII) traverse the membrane as a helical segment. Residues 343-405 (IPDFLQLLPN…TKSATNYNYP (63 aa)) are Cytoplasmic-facing. The chain crosses the membrane as a helical span at residues 406 to 426 (LLTLAFVGFLIITIIAIYVLL). At 427-439 (RYSGPDFWQLRVS) the chain is on the lumenal side. Residues 440–460 (SLSVLLVSIILGVSTFASSFI) traverse the membrane as a helical segment. Residues 461–469 (EEEHQLWWW) lie on the Cytoplasmic side of the membrane. The chain crosses the membrane as a helical span at residues 470-490 (IVTAFSAVPLFVYRLNVLIIV). The Lumenal segment spans residues 491 to 533 (RWFIMMACVRSIKFWNNSGQKFIYSNVMSNLLNQNPSWKWCLN). Asn-506 is a glycosylation site (N-linked (GlcNAc...) asparagine). Residues 534–554 (MLTFLVLIMASAGFQVLHFIV) form a helical membrane-spanning segment. Residues 555-598 (TTILVGLCFTYKISWEIVNGNQAEIPLFMHDLLAKIDFAPTESN) are Cytoplasmic-facing. Residues 599–619 (LIVLARVFFQAWAIVVISRLV) form a helical membrane-spanning segment. At 620–651 (LTKLKVLNKNYLIKDMKVYITILLMFQTSSQN) the chain is on the lumenal side. Residues 652-672 (IGQFLVFQILESQIFYFFQNI) traverse the membrane as a helical segment. At 673 to 682 (PTASLTSTSK) the chain is on the cytoplasmic side. The helical transmembrane segment at 683 to 703 (IYFSNLVSLILQNFTFFQFGG) threads the bilayer. At 704 to 724 (TNSISTIDLGNAYHGVSSDYN) the chain is on the lumenal side. A helical membrane pass occupies residues 725 to 745 (IYVVGILMSVANFAPAIYWSM). The Cytoplasmic portion of the chain corresponds to 746-768 (LPWSINYASIPAQVKLQTFIRSK). The helical transmembrane segment at 769-789 (LPAFTYHCIFGTCLMTACVVL) threads the bilayer. The Lumenal portion of the chain corresponds to 790 to 805 (RFHLFIWSVFSPKLCY). A helical transmembrane segment spans residues 806-826 (FLGWNFVMGLLNGWLPELALL). Topologically, residues 827-830 (CALD) are cytoplasmic.

It belongs to the PIGG/PIGN/PIGO family. PIGG subfamily. N-glycosylated.

The protein localises to the endoplasmic reticulum membrane. The protein operates within glycolipid biosynthesis; glycosylphosphatidylinositol-anchor biosynthesis. Its function is as follows. Ethanolamine phosphate transferase involved in glycosylphosphatidylinositol-anchor biosynthesis. Transfers ethanolamine phosphate to the GPI second mannose. Although not essential, addition of ethanolamine phosphate to the second mannose plays an important role in cell separation via the GPI-based modification of daughter-specific proteins. In Saccharomyces cerevisiae (strain ATCC 204508 / S288c) (Baker's yeast), this protein is GPI ethanolamine phosphate transferase 2 (LAS21).